The following is a 582-amino-acid chain: Bifunctional lycopene cyclase/phytoene synthase (582 aa).

A lycopene beta-cyclase region spans residues 1 to 261 (MNQNGTRLCY…VVLGLVGCDY (261 aa)). A run of 6 helical transmembrane segments spans residues 34 to 54 (CTYT…FFTA), 59 to 79 (KICI…SYLI), 99 to 121 (IPIE…YCIF), 142 to 162 (YVVA…LLLG), 170 to 190 (LILV…YPFL), and 242 to 262 (ALFF…CDYA). The phytoene synthase stretch occupies residues 268-582 (YESLSQPASD…LLSALVYRLE (315 aa)).

The protein in the N-terminal section; belongs to the lycopene beta-cyclase family. It in the C-terminal section; belongs to the phytoene/squalene synthase family.

Its subcellular location is the membrane. It carries out the reaction all-trans-lycopene = gamma-carotene. The catalysed reaction is gamma-carotene = all-trans-beta-carotene. The enzyme catalyses 2 (2E,6E,10E)-geranylgeranyl diphosphate = 15-cis-phytoene + 2 diphosphate. The protein operates within carotenoid biosynthesis; beta-carotene biosynthesis. It participates in carotenoid biosynthesis; phytoene biosynthesis; all-trans-phytoene from geranylgeranyl diphosphate: step 1/1. Its function is as follows. Bifunctional enzyme that catalyzes the reactions from geranylgeranyl diphosphate to phytoene (phytoene synthase) and lycopene to beta-carotene via the intermediate gamma-carotene (lycopene cyclase). This Aspergillus niger (strain ATCC MYA-4892 / CBS 513.88 / FGSC A1513) protein is Bifunctional lycopene cyclase/phytoene synthase.